A 135-amino-acid chain; its full sequence is Transcriptional regulator HosA (135 aa).

The region spanning 4–134 (RNKAFHQLRQ…FMQLVRKMMN (131 aa)) is the HTH marR-type domain. Residues 48-71 (QVALIEAAVSTKATLAEMLARMEN) constitute a DNA-binding region (H-T-H motif).

Its function is as follows. Involved in the temperature-dependent positive control of flagellum-driven swimming motility and cellular aggregation. Regulates fliC expression by directly interacting with fliC promoter. This chain is Transcriptional regulator HosA (hosA), found in Escherichia coli O127:H6 (strain E2348/69 / EPEC).